Consider the following 396-residue polypeptide: MLSEVLLVSAPGKVILHGEHAVVHGKVALAVALNLRTFLRLQPHSNGRVGLNLPNIGVRRAWDVASLQLLDTSFLGHGDSAALTAKHVEKLKEVAGFPKDCVDPEHLAVLAFLYLYLSICQSQRALPSLDITVWSELPTGAGLGSSAAYSVCLAAALLTACEEIPNPLKDGEAAGRWTEENLELINKWAFQGERVIHGNPSGVDNAVSTWGGALRYQQGKISSLKRPPVLKILLINTKVPRSTKVLVANVRSRLLKFPEIVAPLLTSIDAISLECERVLGEMAAAPTPEHYLTLEELIDMNQHHLNALGVGHASLDQLCQVTTAHGLHSKLTGAGGGGCGITLLRPDVERPAVEATKRALSGCGFDCWETSVGAPGVSVHTAASLDASVQQGLDSL.

ATP-binding positions include K13, N55, S135, and 140 to 146 (GAGLGSS). S146 serves as the catalytic Proton donor. S146 and E193 together coordinate Mg(2+). Catalysis depends on D204, which acts as the Proton acceptor.

It belongs to the GHMP kinase family. Mevalonate kinase subfamily. In terms of assembly, homodimer. The cofactor is Mg(2+).

Its subcellular location is the cytoplasm. It localises to the peroxisome. The catalysed reaction is (R)-mevalonate + ATP = (R)-5-phosphomevalonate + ADP + H(+). It participates in isoprenoid biosynthesis; isopentenyl diphosphate biosynthesis via mevalonate pathway; isopentenyl diphosphate from (R)-mevalonate: step 1/3. Its activity is regulated as follows. Farnesyl pyrophosphate and geranyl pyrophosphate inhibit mevalonate kinase activity by binding competitively at the ATP-binding sites. In terms of biological role, catalyzes the phosphorylation of mevalonate to mevalonate 5-phosphate, a key step in isoprenoid and cholesterol biosynthesis. This chain is Mevalonate kinase, found in Bos taurus (Bovine).